Here is a 588-residue protein sequence, read N- to C-terminus: Protein decapentaplegic (588 aa).

The signal sequence occupies residues 1–23 (MRAWLLLLAVLATFQTIVRVAST). Positions 24–456 (EDISQRFIAA…DGRHKARSIR (433 aa)) are excised as a propeptide. The disordered stretch occupies residues 74–169 (FSEPASFSDS…STESHQSSSI (96 aa)). Residues 96 to 119 (SKSDANRQFNEVHKPRTDQLENSK) are compositionally biased toward basic and acidic residues. N-linked (GlcNAc...) asparagine glycosylation is present at N120. A compositionally biased stretch (basic residues) spans 140-153 (RSHHKKSHHHRSHQ). Residues 156 to 169 (QASASTESHQSSSI) are compositionally biased toward low complexity. 2 N-linked (GlcNAc...) asparagine glycosylation sites follow: N342 and N377. A disordered region spans residues 454–484 (SIRDVSGGEGGGKGGRNKRQPRRPTRRKNHD). Basic residues predominate over residues 468 to 481 (GRNKRQPRRPTRRK). 3 disulfides stabilise this stretch: C487-C553, C516-C585, and C520-C587. N529 carries N-linked (GlcNAc...) asparagine glycosylation.

Belongs to the TGF-beta family. Heterodimers of scw/dpp are the active subunit, dpp/dpp homodimers elicit a basal response and scw/scw homodimers alone are ineffective in specifying a dorsal pattern. Component of a complex composed of dpp, sog and tsg. Interacts with nord and gbb; the interaction interferes with dpp secretion. Expressed in the dorsal region of the embryo, and becomes enriched in a dorsal midline stripe just prior to gastrulation. Expressed in midgut mesoderm and in two overlapping regions of the embryonic large intestine. Expressed in a long-range concentration gradient in the wing imaginal disk.

The protein resides in the secreted. Functionally, required during oogenesis for eggshell patterning and dorsal/ventral patterning of the embryo. Acts as a morphogen during embryogenesis to pattern the dorsal/ventral axis, specifying dorsal ectoderm and amnioserosa cell fate within the dorsal half of the embryo; this activity is antagonized by binding to sog and tsg. Induces the formation of visceral mesoderm and the heart in early embryos. Required later in embryogenesis for dorsal closure and patterning of the hindgut. Also functions postembryonically as a long-range morphogen during imaginal disk development; is responsible for the progression of the morphogenetic furrow during eye development. Patterns the wing imaginal disk along its anterior/posterior axis and has a role in positioning pro-veins. Also required to subdivide the wing disk along the proximal/distal axis into body wall (notum) and wing. Ensures the correct architecture of wing epithelial cells. Has multiple roles in the developing tracheal system, controlling directed tracheal cell migration during embryogenesis and later specifying the fate of fusion cells in the tracheal branches. Required for viability of larvae. Essential for the maintenance and division of germline stem cells in the ovary. Signals via the type I receptor tkv, the type II receptor punt, and in some tissues via the type I receptor sax, in a signaling cascade that leads to activation and repression of target genes. This chain is Protein decapentaplegic (dpp), found in Drosophila melanogaster (Fruit fly).